A 41-amino-acid polypeptide reads, in one-letter code: Divisome-associated membrane protein Blr (41 aa).

Over Met-1–Arg-3 the chain is Cytoplasmic. Residues Leu-4 to Ser-24 form a helical membrane-spanning segment. The Periplasmic segment spans residues His-25 to Lys-41.

In terms of assembly, interacts with FtsL and several other divisomal proteins, including FtsI, FtsK, FtsN, FtsQ, FtsW and YmgF. Post-translationally, the N-terminus is blocked.

It localises to the cell inner membrane. Its function is as follows. Component of the cell division machinery, which is probably involved in the stabilization of the divisome under certain stress conditions. The chain is Divisome-associated membrane protein Blr (blr) from Escherichia coli (strain K12).